We begin with the raw amino-acid sequence, 363 residues long: Teichoic acids export ATP-binding protein TagH (363 aa).

An ABC transporter domain is found at 27–246 (KHFFNIGNVD…YRKFSKDFKA (220 aa)). 60-67 (GINGSGKS) serves as a coordination point for ATP. The unknown stretch occupies residues 247-363 (QTAAYRKKYQ…KSQSVLFNSK (117 aa)).

This sequence belongs to the ABC transporter superfamily. Teichoic acids exporter (TC 3.A.1.104.1) family. The complex is composed of two ATP-binding proteins (TagH) and two transmembrane proteins (TagG).

The protein localises to the cell membrane. It catalyses the reaction ATP + H2O + teichoic acidSide 1 = ADP + phosphate + teichoic acidSide 2.. In terms of biological role, part of the ABC transporter complex TagGH involved in teichoic acids export. Responsible for energy coupling to the transport system. In Lactiplantibacillus plantarum (strain ATCC BAA-793 / NCIMB 8826 / WCFS1) (Lactobacillus plantarum), this protein is Teichoic acids export ATP-binding protein TagH.